We begin with the raw amino-acid sequence, 124 residues long: Large ribosomal subunit protein eL31 (124 aa).

The protein belongs to the eukaryotic ribosomal protein eL31 family.

This is Large ribosomal subunit protein eL31 (RpL31) from Spodoptera frugiperda (Fall armyworm).